Here is a 433-residue protein sequence, read N- to C-terminus: CinA-like protein (433 aa).

Belongs to the CinA family.

The sequence is that of CinA-like protein from Frankia casuarinae (strain DSM 45818 / CECT 9043 / HFP020203 / CcI3).